The primary structure comprises 79 residues: Sulfur carrier protein TusA (79 aa).

Cys17 acts as the Cysteine persulfide intermediate in catalysis.

Belongs to the sulfur carrier protein TusA family.

It localises to the cytoplasm. Functionally, sulfur carrier protein which probably makes part of a sulfur-relay system. The protein is Sulfur carrier protein TusA of Haemophilus influenzae (strain 86-028NP).